Consider the following 107-residue polypeptide: Putative antitoxin VapB5 (107 aa).

The next 2 membrane-spanning stretches (helical) occupy residues 3–23 and 65–85; these read GPVI…ILLA and LIIL…AYLY.

It is found in the cell membrane. In terms of biological role, possibly the antitoxin component of a type II toxin-antitoxin (TA) system. Its cognate toxin is VapC5 (Potential). This is Putative antitoxin VapB5 (vapB5) from Methanocaldococcus jannaschii (strain ATCC 43067 / DSM 2661 / JAL-1 / JCM 10045 / NBRC 100440) (Methanococcus jannaschii).